The sequence spans 156 residues: Endoribonuclease YbeY (156 aa).

Positions 117, 121, and 127 each coordinate Zn(2+).

It belongs to the endoribonuclease YbeY family. It depends on Zn(2+) as a cofactor.

The protein localises to the cytoplasm. In terms of biological role, single strand-specific metallo-endoribonuclease involved in late-stage 70S ribosome quality control and in maturation of the 3' terminus of the 16S rRNA. The protein is Endoribonuclease YbeY of Shewanella pealeana (strain ATCC 700345 / ANG-SQ1).